A 167-amino-acid polypeptide reads, in one-letter code: Signal peptidase complex catalytic subunit SEC11 (167 aa).

Residues 1-12 (MNLRLELTRFLK) lie on the Cytoplasmic side of the membrane. Residues 13–30 (LCFVLSSAFMFWKGLSIA) traverse the membrane as a helical; Signal-anchor for type II membrane protein segment. Topologically, residues 31–167 (TNSHSPIVVV…LGISALLSNE (137 aa)) are lumenal. Active-site charge relay system residues include Ser44, His83, and Asp109. The interval 153–164 (ALMGFLGISALL) is C-terminal short (CTS) helix.

Belongs to the peptidase S26B family. In terms of assembly, component of the signal peptidase complex (SPC) composed of a catalytic subunit SEC11 and three accessory subunits SPC1, SPC2 and SPC3. The complex induces a local thinning of the ER membrane which is used to measure the length of the signal peptide (SP) h-region of protein substrates. This ensures the selectivity of the complex towards h-regions shorter than 18-20 amino acids. SPC associates with the translocon complex.

It is found in the endoplasmic reticulum membrane. It carries out the reaction Cleavage of hydrophobic, N-terminal signal or leader sequences from secreted and periplasmic proteins.. Functionally, catalytic component of the signal peptidase complex (SPC) which catalyzes the cleavage of N-terminal signal sequences from nascent proteins as they are translocated into the lumen of the endoplasmic reticulum. Specifically cleaves N-terminal signal peptides that contain a hydrophobic alpha-helix (h-region) shorter than 18-20 amino acids. The sequence is that of Signal peptidase complex catalytic subunit SEC11 (SEC11) from Zygosaccharomyces rouxii (strain ATCC 2623 / CBS 732 / NBRC 1130 / NCYC 568 / NRRL Y-229).